Here is a 169-residue protein sequence, read N- to C-terminus: Crossover junction endodeoxyribonuclease RuvC (169 aa).

Residues Asp11, Glu71, and Asp143 contribute to the active site. Asp11, Glu71, and Asp143 together coordinate Mg(2+).

The protein belongs to the RuvC family. In terms of assembly, homodimer which binds Holliday junction (HJ) DNA. The HJ becomes 2-fold symmetrical on binding to RuvC with unstacked arms; it has a different conformation from HJ DNA in complex with RuvA. In the full resolvosome a probable DNA-RuvA(4)-RuvB(12)-RuvC(2) complex forms which resolves the HJ. The cofactor is Mg(2+).

The protein resides in the cytoplasm. It catalyses the reaction Endonucleolytic cleavage at a junction such as a reciprocal single-stranded crossover between two homologous DNA duplexes (Holliday junction).. Functionally, the RuvA-RuvB-RuvC complex processes Holliday junction (HJ) DNA during genetic recombination and DNA repair. Endonuclease that resolves HJ intermediates. Cleaves cruciform DNA by making single-stranded nicks across the HJ at symmetrical positions within the homologous arms, yielding a 5'-phosphate and a 3'-hydroxyl group; requires a central core of homology in the junction. The consensus cleavage sequence is 5'-(A/T)TT(C/G)-3'. Cleavage occurs on the 3'-side of the TT dinucleotide at the point of strand exchange. HJ branch migration catalyzed by RuvA-RuvB allows RuvC to scan DNA until it finds its consensus sequence, where it cleaves and resolves the cruciform DNA. In Allorhizobium ampelinum (strain ATCC BAA-846 / DSM 112012 / S4) (Agrobacterium vitis (strain S4)), this protein is Crossover junction endodeoxyribonuclease RuvC.